The chain runs to 126 residues: Arginine decarboxylase proenzyme (126 aa).

Ser-74 functions as the Schiff-base intermediate with substrate; via pyruvic acid in the catalytic mechanism. At Ser-74 the chain carries Pyruvic acid (Ser); by autocatalysis. His-79 serves as the catalytic Proton acceptor; for processing activity. The Proton donor; for catalytic activity role is filled by Cys-94.

Belongs to the prokaryotic AdoMetDC family. Type 1 subfamily. In terms of assembly, heterooctamer of four alpha and four beta chains arranged as a tetramer of alpha/beta heterodimers. It depends on pyruvate as a cofactor. Is synthesized initially as an inactive proenzyme. Formation of the active enzyme involves a self-maturation process in which the active site pyruvoyl group is generated from an internal serine residue via an autocatalytic post-translational modification. Two non-identical subunits are generated from the proenzyme in this reaction, and the pyruvate is formed at the N-terminus of the alpha chain, which is derived from the carboxyl end of the proenzyme. The post-translation cleavage follows an unusual pathway, termed non-hydrolytic serinolysis, in which the side chain hydroxyl group of the serine supplies its oxygen atom to form the C-terminus of the beta chain, while the remainder of the serine residue undergoes an oxidative deamination to produce ammonia and the pyruvoyl group blocking the N-terminus of the alpha chain.

It catalyses the reaction L-arginine + H(+) = agmatine + CO2. Its pathway is amine and polyamine biosynthesis; agmatine biosynthesis; agmatine from L-arginine: step 1/1. In terms of biological role, specifically catalyzes the decarboxylation of L-arginine to agmatine. Has no S-adenosylmethionine decarboxylase (AdoMetDC) activity. In Pyrobaculum neutrophilum (strain DSM 2338 / JCM 9278 / NBRC 100436 / V24Sta) (Thermoproteus neutrophilus), this protein is Arginine decarboxylase proenzyme.